Consider the following 423-residue polypeptide: 4-hydroxy-3-methylbut-2-en-1-yl diphosphate synthase (flavodoxin) (423 aa).

[4Fe-4S] cluster-binding residues include Cys307, Cys310, Cys353, and Glu360.

It belongs to the IspG family. The cofactor is [4Fe-4S] cluster.

It carries out the reaction (2E)-4-hydroxy-3-methylbut-2-enyl diphosphate + oxidized [flavodoxin] + H2O + 2 H(+) = 2-C-methyl-D-erythritol 2,4-cyclic diphosphate + reduced [flavodoxin]. It functions in the pathway isoprenoid biosynthesis; isopentenyl diphosphate biosynthesis via DXP pathway; isopentenyl diphosphate from 1-deoxy-D-xylulose 5-phosphate: step 5/6. Converts 2C-methyl-D-erythritol 2,4-cyclodiphosphate (ME-2,4cPP) into 1-hydroxy-2-methyl-2-(E)-butenyl 4-diphosphate. This chain is 4-hydroxy-3-methylbut-2-en-1-yl diphosphate synthase (flavodoxin), found in Brucella anthropi (strain ATCC 49188 / DSM 6882 / CCUG 24695 / JCM 21032 / LMG 3331 / NBRC 15819 / NCTC 12168 / Alc 37) (Ochrobactrum anthropi).